The primary structure comprises 305 residues: Spermatogenesis-associated protein 4 (305 aa).

The region spanning Ser49 to Arg155 is the Calponin-homology (CH) domain.

In terms of tissue distribution, highly expressed in testis, the expression is observed precisely in seminiferous tubules.

It localises to the nucleus. May play a role in apoptosis regulation. This Homo sapiens (Human) protein is Spermatogenesis-associated protein 4 (SPATA4).